The sequence spans 141 residues: Hemoglobin subunit alpha-A (141 aa).

A Globin domain is found at 1-141; sequence VLSASDKANV…VGTVLTAKYR (141 aa). H58 serves as a coordination point for O2. H87 is a heme b binding site.

Belongs to the globin family. As to quaternary structure, heterotetramer of two alpha chains and two beta chains. Red blood cells.

Functionally, involved in oxygen transport from the lung to the various peripheral tissues. This chain is Hemoglobin subunit alpha-A (HBAA), found in Sturnus vulgaris (Starling).